We begin with the raw amino-acid sequence, 309 residues long: Acetolactate synthase small subunit, mitochondrial (309 aa).

A mitochondrion-targeting transit peptide spans 1-24; sequence MLRSLLQSGHRRVVASSCATMVRC. The ACT domain occupies 79–159; it reads VLNCLVQNEP…DYTNSEIIKR (81 aa).

The protein belongs to the acetolactate synthase small subunit family. In terms of assembly, the acetolactate synthase complex contains the catalytic regulatory subunit ILV2 and the regulatory small subunit ILV6.

The protein resides in the mitochondrion. It participates in amino-acid biosynthesis; L-isoleucine biosynthesis; L-isoleucine from 2-oxobutanoate: step 1/4. Its pathway is amino-acid biosynthesis; L-valine biosynthesis; L-valine from pyruvate: step 1/4. Its function is as follows. Regulatory subunit of mitochondrial acetolactate synthase, which catalyzes the first of a series of common steps in the biosynthesis of the branched-chain amino acids. Stimulates activity of the acetolactate synthase catalytic subunit ILV2 seven- to tenfold and confers sensitivity to inhibition by valine and activation by ATP. The sequence is that of Acetolactate synthase small subunit, mitochondrial (ILV6) from Saccharomyces cerevisiae (strain ATCC 204508 / S288c) (Baker's yeast).